The chain runs to 166 residues: PTS system glucose-specific EIIA component (166 aa).

The region spanning 34 to 138 (DPVFAQKMMG…SVISPIIITN (105 aa)) is the PTS EIIA type-1 domain. His-71 and His-86 together coordinate Zn(2+). The active-site Tele-phosphohistidine intermediate; for EIIA activity is His-86. His-86 carries the phosphohistidine; by HPr modification.

As to quaternary structure, heterodimer with glycerol kinase (glpk). Zn(2+) is required as a cofactor.

The protein localises to the cytoplasm. In terms of biological role, the phosphoenolpyruvate-dependent sugar phosphotransferase system (sugar PTS), a major carbohydrate active transport system, catalyzes the phosphorylation of incoming sugar substrates concomitantly with their translocation across the cell membrane. The enzyme II complex composed of PtsG and Crr is involved in glucose transport. The sequence is that of PTS system glucose-specific EIIA component (crr) from Staphylococcus aureus (strain MRSA252).